The sequence spans 420 residues: Probable serine hydroxymethyltransferase (420 aa).

(6S)-5,6,7,8-tetrahydrofolate contacts are provided by residues L121 and 125–127; that span reads GHL. K230 carries the post-translational modification N6-(pyridoxal phosphate)lysine. (6S)-5,6,7,8-tetrahydrofolate-binding positions include E246 and 354 to 356; that span reads SPF.

Belongs to the SHMT family. Homodimer. Requires pyridoxal 5'-phosphate as cofactor.

It is found in the cytoplasm. It catalyses the reaction (6R)-5,10-methylene-5,6,7,8-tetrahydrofolate + glycine + H2O = (6S)-5,6,7,8-tetrahydrofolate + L-serine. The protein operates within one-carbon metabolism; tetrahydrofolate interconversion. Functionally, catalyzes the reversible interconversion of serine and glycine with tetrahydrofolate (THF) serving as the one-carbon carrier. This reaction serves as the major source of one-carbon groups required for the biosynthesis of purines, thymidylate, methionine, and other important biomolecules. This is Probable serine hydroxymethyltransferase from Rickettsia bellii (strain RML369-C).